The chain runs to 948 residues: Valine--tRNA ligase (948 aa).

Positions 40–50 match the 'HIGH' region motif; the sequence is PNVTGSLHMGH. A 'KMSKS' region motif is present at residues 551–555; the sequence is KMSKS. Lys-554 contacts ATP. Positions 879–945 form a coiled coil; sequence LIDKGAELAR…GKLAEQHARI (67 aa).

It belongs to the class-I aminoacyl-tRNA synthetase family. ValS type 1 subfamily. Monomer.

It localises to the cytoplasm. It catalyses the reaction tRNA(Val) + L-valine + ATP = L-valyl-tRNA(Val) + AMP + diphosphate. In terms of biological role, catalyzes the attachment of valine to tRNA(Val). As ValRS can inadvertently accommodate and process structurally similar amino acids such as threonine, to avoid such errors, it has a 'posttransfer' editing activity that hydrolyzes mischarged Thr-tRNA(Val) in a tRNA-dependent manner. In Pseudomonas savastanoi pv. phaseolicola (strain 1448A / Race 6) (Pseudomonas syringae pv. phaseolicola (strain 1448A / Race 6)), this protein is Valine--tRNA ligase.